We begin with the raw amino-acid sequence, 196 residues long: Molybdopterin synthase catalytic subunit (196 aa).

Residues 110-111 (HR), lysine 126, and 133-135 (KKE) each bind substrate. Positions 142-196 (GGIWRANRDGAVGERVDEDEEKKKPDMGPHGPILRPSRPGERGHGPVVRNHQLGS) are disordered. Basic and acidic residues predominate over residues 147–168 (ANRDGAVGERVDEDEEKKKPDM).

The protein belongs to the MoaE family. MOCS2B subfamily. Heterotetramer; composed of 2 small (MOCS2A) and 2 large (MOCS2B) subunits.

It localises to the cytoplasm. The enzyme catalyses 2 [molybdopterin-synthase sulfur-carrier protein]-C-terminal-Gly-aminoethanethioate + cyclic pyranopterin phosphate + H2O = molybdopterin + 2 [molybdopterin-synthase sulfur-carrier protein]-C-terminal Gly-Gly + 2 H(+). Its pathway is cofactor biosynthesis; molybdopterin biosynthesis. Catalytic subunit of the molybdopterin synthase complex, a complex that catalyzes the conversion of precursor Z into molybdopterin. Acts by mediating the incorporation of 2 sulfur atoms from thiocarboxylated MOCS2A into precursor Z to generate a dithiolene group. This Sclerotinia sclerotiorum (strain ATCC 18683 / 1980 / Ss-1) (White mold) protein is Molybdopterin synthase catalytic subunit.